The primary structure comprises 147 residues: Transmembrane protein 210 (147 aa).

Residues 1–31 (MAPCPQPESCPAGSPLGLICLSLLLIPASAG) form the signal peptide. Topologically, residues 32–47 (TYCECSLGLSREALIA) are extracellular. Residues 48–68 (LIVVLAGVSASCFCALVVVAI) traverse the membrane as a helical segment. Residues 69 to 147 (GVFRAKGDTC…PPPPPPPLPQ (79 aa)) are Cytoplasmic-facing. The tract at residues 128–147 (TMTAPLEPPPPPPPPPPLPQ) is disordered. Positions 133-147 (LEPPPPPPPPPPLPQ) are enriched in pro residues.

Its subcellular location is the membrane. It is found in the cytoplasmic vesicle. The protein resides in the secretory vesicle. It localises to the acrosome. This is Transmembrane protein 210 (Tmem210) from Mus musculus (Mouse).